The primary structure comprises 532 residues: Tyrosine-protein kinase Src-1 (532 aa).

Positions 1–52 (MGATKSKPREGGPRSRSLDIVEGSHQPFTSLSASQTPNKSLDSHRPPAQPFG) are disordered. G2 carries the N-myristoyl glycine lipid modification. Residues 7–19 (KPREGGPRSRSLD) are compositionally biased toward basic and acidic residues. Residues 26–40 (QPFTSLSASQTPNKS) show a composition bias toward polar residues. The SH3 domain occupies 80–141 (GGVTTFVALY…PSNYVAPSDS (62 aa)). The SH2 domain occupies 147–244 (WYLGKITRRE…GLCHRLTTVC (98 aa)). Positions 266 to 519 (LRLELKLGQG…YLQAFLEDYF (254 aa)) constitute a Protein kinase domain. Residues 272–280 (LGQGCFGEV) and K294 contribute to the ATP site. Residue D385 is the Proton acceptor of the active site. Y415 is modified (phosphotyrosine; by autocatalysis).

The protein belongs to the protein kinase superfamily. Tyr protein kinase family. SRC subfamily.

The protein resides in the cell membrane. It carries out the reaction L-tyrosyl-[protein] + ATP = O-phospho-L-tyrosyl-[protein] + ADP + H(+). This chain is Tyrosine-protein kinase Src-1 (src-a), found in Xenopus laevis (African clawed frog).